The chain runs to 133 residues: Lanmodulin (133 aa).

A signal peptide spans 1–21 (MAFRLSSAVLLAALVAAPAYA). The Nd(3+) site is built by Asp-35, Asp-37, Asp-39, Thr-41, Glu-46, Asp-59, Asp-61, Asp-63, Thr-65, Glu-70, Asp-84, Asp-86, Asp-88, Thr-90, Glu-95, Asn-108, Asp-110, Asp-112, Thr-114, and Glu-119. EF-hand domains follow at residues 35–46 (DPDKDGTIDLKE), 59–70 (DPDKDGTLDAKE), 84–95 (DPDNDGTLDKKE), and 108–119 (NPDNDGTIDARE).

In terms of assembly, monomer.

The protein localises to the periplasm. Its function is as follows. High-affinity lanthanide (Ln)-binding protein. Shows 100 million-fold selectivity for La(3+) over Ca(2+). Binds 3 equiv of Ln(3+) with picomolar affinity and a fourth with approximately micromolar affinity. May be involved in receiving and then transporting lanthanides (such as La(3+), Nd(3+) and Sm(3+)) to a specific periplasmic destination. The sequence is that of Lanmodulin from Methylorubrum extorquens (strain ATCC 14718 / DSM 1338 / JCM 2805 / NCIMB 9133 / AM1) (Methylobacterium extorquens).